We begin with the raw amino-acid sequence, 188 residues long: MNAFFDSFKNHFLISMPHLDDPHFEHTVIYLCEHTKAGAMGIIINRPSNVDFTELADHLGIQIHSPRLSSEPIYTGGPVEAERGFILHTTDKVWSNTLRVTDEVSLSASLEALEDIAQGNGPDAFRITLGCAGWDAGQLEAEIANNDWLVCEADLDVLFHTPSDMQFTAATRVLGIDMTRLSPDIGHG.

This sequence belongs to the UPF0301 (AlgH) family.

This Marinomonas sp. (strain MWYL1) protein is UPF0301 protein Mmwyl1_0539.